A 100-amino-acid polypeptide reads, in one-letter code: Co-chaperonin GroES (100 aa).

It belongs to the GroES chaperonin family. In terms of assembly, heptamer of 7 subunits arranged in a ring. Interacts with the chaperonin GroEL.

It localises to the cytoplasm. Its function is as follows. Together with the chaperonin GroEL, plays an essential role in assisting protein folding. The GroEL-GroES system forms a nano-cage that allows encapsulation of the non-native substrate proteins and provides a physical environment optimized to promote and accelerate protein folding. GroES binds to the apical surface of the GroEL ring, thereby capping the opening of the GroEL channel. The protein is Co-chaperonin GroES of Mycobacterium marinum (strain ATCC BAA-535 / M).